We begin with the raw amino-acid sequence, 86 residues long: Large ribosomal subunit protein eL30 (86 aa).

Belongs to the eukaryotic ribosomal protein eL30 family.

This chain is Large ribosomal subunit protein eL30 (rpl30e), found in Archaeoglobus fulgidus (strain ATCC 49558 / DSM 4304 / JCM 9628 / NBRC 100126 / VC-16).